The chain runs to 606 residues: KH domain-containing protein At4g18375 (606 aa).

Residues 1–10 (MVERKKRKQI) show a composition bias toward basic residues. Positions 1–26 (MVERKKRKQIQRNNSESNRNQKRRIS) are disordered. KH domains follow at residues 35–99 (LVVY…IGFT), 138–210 (NKEC…LFAV), 311–380 (ELVF…VEAV), 394–455 (NVKM…LIQI), and 535–599 (SSAL…ENLV).

The protein resides in the nucleus. This chain is KH domain-containing protein At4g18375, found in Arabidopsis thaliana (Mouse-ear cress).